The following is a 596-amino-acid chain: Phosphoenolpyruvate carboxykinase [GTP] (596 aa).

Substrate contacts are provided by residues Arg-77 and 205 to 207 (YGG). Mn(2+)-binding residues include Lys-214 and His-234. Ser-256 lines the substrate pocket. 257–262 (ACGKTN) contributes to the GTP binding site. Residue Cys-258 is part of the active site. Residue Asp-283 coordinates Mn(2+). Residues 362-388 (KKGSTEKAAHPNSRFTAPAKNNPAISP) are disordered. Residue 373–375 (NSR) coordinates substrate. GTP is bound by residues Arg-375, Arg-406, and 499-502 (YGDN).

The protein belongs to the phosphoenolpyruvate carboxykinase [GTP] family. As to quaternary structure, monomer. Mn(2+) is required as a cofactor.

The protein resides in the cytoplasm. It catalyses the reaction oxaloacetate + GTP = phosphoenolpyruvate + GDP + CO2. Its pathway is carbohydrate biosynthesis; gluconeogenesis. Functionally, catalyzes the conversion of oxaloacetate (OAA) to phosphoenolpyruvate (PEP), the rate-limiting step in the metabolic pathway that produces glucose from lactate and other precursors derived from the citric acid cycle. In Anaeromyxobacter sp. (strain K), this protein is Phosphoenolpyruvate carboxykinase [GTP].